The sequence spans 120 residues: Large ribosomal subunit protein uL18 (120 aa).

This sequence belongs to the universal ribosomal protein uL18 family. Part of the 50S ribosomal subunit; part of the 5S rRNA/L5/L18/L25 subcomplex. Contacts the 5S and 23S rRNAs.

Functionally, this is one of the proteins that bind and probably mediate the attachment of the 5S RNA into the large ribosomal subunit, where it forms part of the central protuberance. The chain is Large ribosomal subunit protein uL18 from Azorhizobium caulinodans (strain ATCC 43989 / DSM 5975 / JCM 20966 / LMG 6465 / NBRC 14845 / NCIMB 13405 / ORS 571).